Consider the following 527-residue polypeptide: Butyrophilin subfamily 2 member A1 (527 aa).

Residues 1–28 (MESAAALHFSRPASLLLLLLSLCALVSA) form the signal peptide. The region spanning 29 to 141 (QFIVVGPTDP…SYDEAILHLV (113 aa)) is the Ig-like V-type domain. The Extracellular segment spans residues 29–248 (QFIVVGPTDP…SFMPSVSPCA (220 aa)). N-linked (GlcNAc...) asparagine glycans are attached at residues Asn46, Asn114, and Asn120. A disulfide bridge connects residues Cys51 and Cys125. A helical membrane pass occupies residues 249-269 (VALPIIVVILMIPIAVCIYWI). Topologically, residues 270 to 527 (NKLQKEKKIL…LHRVGTHQSL (258 aa)) are cytoplasmic. In terms of domain architecture, B30.2/SPRY spans 310–506 (VKEKLQEELR…IFICPALTGA (197 aa)).

The protein belongs to the immunoglobulin superfamily. BTN/MOG family. Highly expressed in brain, bone marrow, small intestine, muscle, spleen and pancreas. Moderate expression was seen in lung, liver and kidney.

Its subcellular location is the membrane. In Homo sapiens (Human), this protein is Butyrophilin subfamily 2 member A1 (BTN2A1).